The sequence spans 216 residues: Probable GTP-binding protein EngB (216 aa).

The EngB-type G domain occupies 27–201 (EGIEVAFAGR…REKLDTWFSE (175 aa)). GTP-binding positions include 35 to 42 (GRSNAGKS), 62 to 66 (GRTQL), 80 to 83 (DLPG), 147 to 150 (TKAD), and 180 to 182 (FSS). Mg(2+) contacts are provided by serine 42 and threonine 64.

Belongs to the TRAFAC class TrmE-Era-EngA-EngB-Septin-like GTPase superfamily. EngB GTPase family. Requires Mg(2+) as cofactor.

In terms of biological role, necessary for normal cell division and for the maintenance of normal septation. This chain is Probable GTP-binding protein EngB, found in Yersinia pseudotuberculosis serotype O:1b (strain IP 31758).